The primary structure comprises 186 residues: Peptidyl-tRNA hydrolase (186 aa).

TRNA is bound at residue Y14. The active-site Proton acceptor is H19. TRNA contacts are provided by Y64, N66, and N112.

It belongs to the PTH family. Monomer.

The protein resides in the cytoplasm. The enzyme catalyses an N-acyl-L-alpha-aminoacyl-tRNA + H2O = an N-acyl-L-amino acid + a tRNA + H(+). Its function is as follows. Hydrolyzes ribosome-free peptidyl-tRNAs (with 1 or more amino acids incorporated), which drop off the ribosome during protein synthesis, or as a result of ribosome stalling. Catalyzes the release of premature peptidyl moieties from peptidyl-tRNA molecules trapped in stalled 50S ribosomal subunits, and thus maintains levels of free tRNAs and 50S ribosomes. This is Peptidyl-tRNA hydrolase from Bacillus cytotoxicus (strain DSM 22905 / CIP 110041 / 391-98 / NVH 391-98).